Consider the following 256-residue polypeptide: Floral homeotic protein APETALA 1 (256 aa).

Residues 1-61 form the MADS-box domain; that stretch reads MGRGRVQLKR…GKLFEYSTDS (61 aa). A K-box domain is found at 88 to 178; that stretch reads NTNWSMEYNR…FKQIKEREKI (91 aa).

In terms of assembly, homodimer capable of binding to CArG-box sequences.

It localises to the nucleus. Functionally, transcription factor that promotes early floral meristem identity in synergy with LEAFY. Displays a redundant function with CAULIFLOWER in the up-regulation of LEAFY. Required subsequently for the transition of an inflorescence meristem into a floral meristem, and for the normal development of sepals and petals in flowers. Regulates positively B class homeotic proteins. This is Floral homeotic protein APETALA 1 (AP1) from Citrus sinensis (Sweet orange).